A 421-amino-acid polypeptide reads, in one-letter code: Histidine--tRNA ligase (421 aa).

This sequence belongs to the class-II aminoacyl-tRNA synthetase family. Homodimer.

Its subcellular location is the cytoplasm. The catalysed reaction is tRNA(His) + L-histidine + ATP = L-histidyl-tRNA(His) + AMP + diphosphate + H(+). The protein is Histidine--tRNA ligase of Francisella tularensis subsp. novicida (strain U112).